Here is a 132-residue protein sequence, read N- to C-terminus: Agouti-signaling protein (132 aa).

Residues 1–22 form the signal peptide; the sequence is MDVTRLLLATLLVFLCFFTADS. N-linked (GlcNAc...) asparagine glycosylation occurs at Asn39. Positions 62 to 85 are disordered; it reads ISRKEAEKKRSSKKEASMKTVARP. Over residues 63 to 78 the composition is skewed to basic and acidic residues; sequence SRKEAEKKRSSKKEAS. Disulfide bonds link Cys93–Cys108, Cys100–Cys114, Cys107–Cys125, Cys111–Cys132, and Cys116–Cys123. One can recognise an Agouti domain in the interval 93–132; sequence CVATRNSCKPPAPACCDPCASCQCRFFRSACSCRVLSLNC.

It localises to the secreted. In terms of biological role, involved in the regulation of melanogenesis. The binding of ASP to MC1R precludes alpha-MSH initiated signaling and thus blocks production of cAMP, leading to a down-regulation of eumelanogenesis (brown/black pigment) and thus increasing synthesis of pheomelanin (yellow/red pigment). This is Agouti-signaling protein (ASIP) from Pongo pygmaeus (Bornean orangutan).